Here is a 303-residue protein sequence, read N- to C-terminus: MSDVITTDQPASATSLLQAKGIANLVERALLTEVRLTPKPGLVDIRNSGAHKDMDLALFEKSTLAVAPWMENFYQLGYDTSALEAELVLPMLRPIGMACEADMLQATGGVNTHRGAVFSFGLISAVTGRMVALEEELEQNRICYWVARMCRDLVAKELSSEATNAATSKSVEHFLHYGLSGARGEAESGFQTVRTVALPIFERIRAQNEDMNLALLQTLLHLMAWNNDTNLVSRGALKGLYYVQQQAQKMLWEGGVLMRGGLEALQAFDDELIARNLSPGGSADLLAVTWFLSHFPKGETFAD.

It belongs to the CitG/MdcB family.

It carries out the reaction 3'-dephospho-CoA + ATP = 2'-(5''-triphospho-alpha-D-ribosyl)-3'-dephospho-CoA + adenine. Catalyzes the formation of 2-(5''-triphosphoribosyl)-3'-dephosphocoenzyme-A, the precursor of the prosthetic group of the holo-acyl carrier protein (gamma chain) of citrate lyase, from ATP and dephospho-CoA. In Escherichia fergusonii (strain ATCC 35469 / DSM 13698 / CCUG 18766 / IAM 14443 / JCM 21226 / LMG 7866 / NBRC 102419 / NCTC 12128 / CDC 0568-73), this protein is 2-(5''-triphosphoribosyl)-3'-dephosphocoenzyme-A synthase.